We begin with the raw amino-acid sequence, 253 residues long: Flap endonuclease Xni (253 aa).

Asp104 is a Mg(2+) binding site. The region spanning 160 to 250 is the 5'-3' exonuclease domain; it reads VAPQQLTDFW…HGNLQQLRLN (91 aa). The K(+) site is built by Leu171, Ala172, Pro180, Ile182, and Ile185. Residues 184–189 are interaction with DNA; that stretch reads GIGAKT.

This sequence belongs to the Xni family. It depends on Mg(2+) as a cofactor. Requires K(+) as cofactor.

In terms of biological role, has flap endonuclease activity. During DNA replication, flap endonucleases cleave the 5'-overhanging flap structure that is generated by displacement synthesis when DNA polymerase encounters the 5'-end of a downstream Okazaki fragment. The sequence is that of Flap endonuclease Xni from Edwardsiella ictaluri (strain 93-146).